The primary structure comprises 807 residues: MRYEFSKTEAKWQAWWKEQNTFKTGDDADKPKYYVLDMFPYPSGTGLHVGHLEGYTASDITARYKRSCGYNVLHPMGWDAFGLPAEQFAIKTGTHPKTTTEENIRNFKGTLQAMGFSYDWSREINTTDPHYFKWTQWIFLKLYERGLAYMSEVDVNWCEELKTVLANEEVDEKIADGYTVVRRPLRQWVLKITAYADRLLADLDELNWPENVKQMQRNWIGRSEGVEIDFELRCHNKKLRVYTTRPDTLFGATYLVISPEHPLAEKLATAQQLVEVKNYISKAKLKTELERTGLQKEKTGVFTGSYAINPATGEPLPVWISDFVLISYGTGAIMSVPAHDSRDWEFAKQYNLPIIEVIQSPHDVQERVFEEKESICVNSANNEITLNGLPFCEAFERMASWLETKKAGERKVNYKLRDWIFSRQRYWGEPIPIKHYHDGTLRLETALPLVLPEVEAYHPSSTGESPLANIPHWLYGSDEHGSFRRETNTMPQWAGSCWYYLRFIDPENQEKLVDPEKERYWMNVDLYIGGAEHAVLHLLYARFWHKVLFDLGVVSSREPFKKLFNQGMILGEDNEKMSKSRGNVIPADHVLERYGADAVRLYEMFLGPLEQVKPWNTNGIEGISRFLSKVWRLVYGEHEESATLLSEEAMPEELLRRMHKSIKKVGEDTEQLKFNTAISEMMVFVNELQKSGCKNRSAIETLLVLLSPYAPHITEELWESIGHNYSISQAPFPSFDPKLVEESILTIAVQINGKLRGTFLAPAKSPKELLLQEAKKTESVFKFLDGQTILREIVVVDKLVNFVVKKE.

Residues 40–51 (PYPSGTGLHVGH) carry the 'HIGH' region motif. The 'KMSKS' region signature appears at 576–580 (KMSKS). Lysine 579 serves as a coordination point for ATP.

The protein belongs to the class-I aminoacyl-tRNA synthetase family.

It is found in the cytoplasm. It catalyses the reaction tRNA(Leu) + L-leucine + ATP = L-leucyl-tRNA(Leu) + AMP + diphosphate. In Pelodictyon phaeoclathratiforme (strain DSM 5477 / BU-1), this protein is Leucine--tRNA ligase.